The following is a 234-amino-acid chain: Large ribosomal subunit protein uL1 (234 aa).

The protein belongs to the universal ribosomal protein uL1 family. As to quaternary structure, part of the 50S ribosomal subunit.

Functionally, binds directly to 23S rRNA. The L1 stalk is quite mobile in the ribosome, and is involved in E site tRNA release. In terms of biological role, protein L1 is also a translational repressor protein, it controls the translation of the L11 operon by binding to its mRNA. This is Large ribosomal subunit protein uL1 from Wolinella succinogenes (strain ATCC 29543 / DSM 1740 / CCUG 13145 / JCM 31913 / LMG 7466 / NCTC 11488 / FDC 602W) (Vibrio succinogenes).